We begin with the raw amino-acid sequence, 153 residues long: Small ribosomal subunit protein uS9 (153 aa).

A compositionally biased stretch (low complexity) spans 1–19 (MTAPADEAPAVEDAPVAED). Disordered stretches follow at residues 1-23 (MTAP…IAPV) and 121-153 (LKKA…YSKR). Residues 129-138 (RDSREKERKK) are compositionally biased toward basic and acidic residues. Over residues 139-153 (YGLKKARKAPQYSKR) the composition is skewed to basic residues.

This sequence belongs to the universal ribosomal protein uS9 family.

This Saccharopolyspora erythraea (strain ATCC 11635 / DSM 40517 / JCM 4748 / NBRC 13426 / NCIMB 8594 / NRRL 2338) protein is Small ribosomal subunit protein uS9.